The following is a 382-amino-acid chain: Anthranilate O-methyltransferase 1 (382 aa).

Tyrosine 20 lines the S-adenosyl-L-homocysteine pocket. Glutamine 27 provides a ligand contact to anthranilate. S-adenosyl-L-homocysteine-binding residues include cysteine 61, asparagine 66, aspartate 102, leucine 103, serine 146, and tyrosine 147. Tryptophan 168 is a binding site for anthranilate. The Mg(2+) site is built by glutamate 268 and phenylalanine 270.

This sequence belongs to the methyltransferase superfamily. Type-7 methyltransferase family. SABATH subfamily.

The enzyme catalyses anthranilate + S-adenosyl-L-methionine = O-methyl anthranilate + S-adenosyl-L-homocysteine. Its function is as follows. Methyltransferase involved in the biosynthesis of methyl anthranilate in response to stresses. Utilizes anthranilic acid as substrate, but not salicylic acid. Produces exclusively the O-methyl ester. The sequence is that of Anthranilate O-methyltransferase 1 (AAMT1) from Zea mays (Maize).